The primary structure comprises 446 residues: Forkhead box protein F2 (446 aa).

The segment covering 1 to 18 has biased composition (pro residues); that stretch reads MSTEGGPPPPPPRPPPAP. A disordered region spans residues 1-97; that stretch reads MSTEGGPPPP…TKKATSGLRR (97 aa). Over residues 45 to 78 the composition is skewed to low complexity; sequence STSSSSSSSSASCASSSSNSVSASAGACKSAASS. Positions 100–194 form a DNA-binding region, fork-head; it reads KPPYSYIALI…EEGSFRRRPR (95 aa). Disordered regions lie at residues 257-278, 304-325, and 340-371; these read AGAP…HMSP, GGGG…SPAM, and AHWS…GLHP. The segment covering 263–274 has biased composition (basic residues); it reads AHPHHLHHHHVP. The span at 311-325 shows a compositional bias: low complexity; that stretch reads GPDSSSSPVPSSPAM.

In terms of assembly, interacts with the transcription factors TBP and TFIIB. Uniquely expressed in the bronchiolar epithelium and in type II pneumocytes.

It localises to the nucleus. Its function is as follows. Probable transcription activator for a number of lung-specific genes. Mediates up-regulation of the E3 ligase IRF2BPL and drives ubiquitination and degradation of CTNNB1. The protein is Forkhead box protein F2 (Foxf2) of Mus musculus (Mouse).